Consider the following 95-residue polypeptide: Exodeoxyribonuclease 7 small subunit (95 aa).

The segment at Glu-65–Ser-95 is disordered.

The protein belongs to the XseB family. Heterooligomer composed of large and small subunits.

It is found in the cytoplasm. The enzyme catalyses Exonucleolytic cleavage in either 5'- to 3'- or 3'- to 5'-direction to yield nucleoside 5'-phosphates.. Its function is as follows. Bidirectionally degrades single-stranded DNA into large acid-insoluble oligonucleotides, which are then degraded further into small acid-soluble oligonucleotides. This Chlorobaculum tepidum (strain ATCC 49652 / DSM 12025 / NBRC 103806 / TLS) (Chlorobium tepidum) protein is Exodeoxyribonuclease 7 small subunit.